The following is a 417-amino-acid chain: NADH-quinone oxidoreductase subunit D (417 aa).

This sequence belongs to the complex I 49 kDa subunit family. In terms of assembly, NDH-1 is composed of 14 different subunits. Subunits NuoB, C, D, E, F, and G constitute the peripheral sector of the complex.

The protein localises to the cell inner membrane. The catalysed reaction is a quinone + NADH + 5 H(+)(in) = a quinol + NAD(+) + 4 H(+)(out). Its function is as follows. NDH-1 shuttles electrons from NADH, via FMN and iron-sulfur (Fe-S) centers, to quinones in the respiratory chain. The immediate electron acceptor for the enzyme in this species is believed to be ubiquinone. Couples the redox reaction to proton translocation (for every two electrons transferred, four hydrogen ions are translocated across the cytoplasmic membrane), and thus conserves the redox energy in a proton gradient. The polypeptide is NADH-quinone oxidoreductase subunit D (Janthinobacterium sp. (strain Marseille) (Minibacterium massiliensis)).